The following is a 436-amino-acid chain: Na(+)/H(+) antiporter NhaA (436 aa).

11 helical membrane passes run 31 to 51 (VGGA…NSPG), 74 to 94 (LSLG…IAGL), 112 to 132 (IVPI…YTLI), 143 to 163 (GWAI…AVIS), 173 to 193 (FLLT…AVFY), 196 to 216 (NLQP…TWAV), 222 to 242 (SWYL…ESGV), 285 to 305 (VAVP…WAGF), 315 to 335 (IGII…ATFL), 350 to 370 (WIDV…SLLI), and 384 to 404 (HAKV…TVIL).

It belongs to the NhaA Na(+)/H(+) (TC 2.A.33) antiporter family.

It localises to the cell membrane. It catalyses the reaction Na(+)(in) + 2 H(+)(out) = Na(+)(out) + 2 H(+)(in). In terms of biological role, na(+)/H(+) antiporter that extrudes sodium in exchange for external protons. The chain is Na(+)/H(+) antiporter NhaA from Renibacterium salmoninarum (strain ATCC 33209 / DSM 20767 / JCM 11484 / NBRC 15589 / NCIMB 2235).